A 413-amino-acid polypeptide reads, in one-letter code: Clusterin-associated protein 1 (413 aa).

Positions 198 to 291 form a coiled coil; sequence KTKDLLNNVA…ERFEEAKNTL (94 aa). The segment at 305–413 is disordered; the sequence is LLKSGSNDDS…EPLDESDNDF (109 aa). 2 stretches are compositionally biased toward acidic residues: residues 312–328 and 360–388; these read DDSDIDIQEDDESDSEL and DSDDNEDSEESEIDMEDDDDEDDDLEDES. Phosphoserine is present on residues serine 314, serine 324, and serine 326. At serine 409 the chain carries Phosphoserine.

Belongs to the CLUAP1 family. As to quaternary structure, interacts with CLU/clusterin. Interacts with UBXN10; the interaction is direct. In terms of tissue distribution, expressed in testis, thyroid and trachea and to a lower extent in spinal cord and adrenal gland. Highly expressed in colon cancer and osteosarcoma cell lines.

It is found in the cell projection. The protein localises to the cilium. Its subcellular location is the nucleus. In terms of biological role, required for cilia biogenesis. Appears to function within the multiple intraflagellar transport complex B (IFT-B). Key regulator of hedgehog signaling. The chain is Clusterin-associated protein 1 (CLUAP1) from Homo sapiens (Human).